Reading from the N-terminus, the 424-residue chain is Adenylosuccinate synthetase 1 (424 aa).

GTP is bound by residues 12 to 18 (GDEGKGK) and 40 to 42 (GHT). The active-site Proton acceptor is D13. Residues D13 and G40 each coordinate Mg(2+). IMP contacts are provided by residues 13 to 16 (DEGK), 38 to 41 (NAGH), T127, R141, T236, and R304. H41 functions as the Proton donor in the catalytic mechanism. 300 to 306 (ARTGRPR) provides a ligand contact to substrate. Residues R306, 332–334 (KLD), and 413–415 (GVG) each bind GTP.

Belongs to the adenylosuccinate synthetase family. In terms of assembly, homodimer. It depends on Mg(2+) as a cofactor.

It localises to the cytoplasm. It catalyses the reaction IMP + L-aspartate + GTP = N(6)-(1,2-dicarboxyethyl)-AMP + GDP + phosphate + 2 H(+). It participates in purine metabolism; AMP biosynthesis via de novo pathway; AMP from IMP: step 1/2. Its function is as follows. Plays an important role in the de novo pathway of purine nucleotide biosynthesis. Catalyzes the first committed step in the biosynthesis of AMP from IMP. The polypeptide is Adenylosuccinate synthetase 1 (Methanosarcina acetivorans (strain ATCC 35395 / DSM 2834 / JCM 12185 / C2A)).